The following is a 165-amino-acid chain: Protein SprT (165 aa).

One can recognise a SprT-like domain in the interval 22–163; it reads LAQANLKLDR…RCVHCGEPLV (142 aa). Zn(2+) is bound at residue His-78. Residue Glu-79 is part of the active site. His-82 serves as a coordination point for Zn(2+).

The protein belongs to the SprT family. The cofactor is Zn(2+).

It is found in the cytoplasm. The sequence is that of Protein SprT from Salmonella paratyphi C (strain RKS4594).